The sequence spans 96 residues: MSSGGLLLLLGFLTLWAELTPISGQNRPMFCHLPADSGRCKAHIPRFYYNPASNQCQGFTYGGCGGNANNFETRDQCRHTCGASGNVGPRPRIASN.

The signal sequence occupies residues 1-24 (MSSGGLLLLLGFLTLWAELTPISG). Q25 carries the post-translational modification Pyrrolidone carboxylic acid. Residues 31-81 (CHLPADSGRCKAHIPRFYYNPASNQCQGFTYGGCGGNANNFETRDQCRHTC) form the BPTI/Kunitz inhibitor domain. Cystine bridges form between C31–C81, C40–C64, and C56–C77. The propeptide occupies 85-96 (GNVGPRPRIASN).

This sequence belongs to the venom Kunitz-type family. As to expression, expressed by the venom gland.

Its subcellular location is the secreted. Functionally, serine protease inhibitor. The protein is Kunitz-type serine protease inhibitor C6 of Daboia siamensis (Eastern Russel's viper).